The chain runs to 330 residues: Aspartate--ammonia ligase (330 aa).

This sequence belongs to the class-II aminoacyl-tRNA synthetase family. AsnA subfamily.

It is found in the cytoplasm. The catalysed reaction is L-aspartate + NH4(+) + ATP = L-asparagine + AMP + diphosphate + H(+). It participates in amino-acid biosynthesis; L-asparagine biosynthesis; L-asparagine from L-aspartate (ammonia route): step 1/1. This chain is Aspartate--ammonia ligase, found in Streptococcus thermophilus (strain CNRZ 1066).